Here is a 261-residue protein sequence, read N- to C-terminus: Tyrosine phosphatase-like protein H5 (261 aa).

Residues 26 to 261 form the Tyrosine-protein phosphatase domain; it reads LIKKEHDKVL…ESVEQEYFVP (236 aa).

This sequence belongs to the protein-tyrosine phosphatase family.

This is Tyrosine phosphatase-like protein H5 (H6) from Microplitis demolitor bracovirus (isolate Webb) (MdBV).